A 720-amino-acid chain; its full sequence is MGKNYKSLDSVVASDFIALGITSEVAETLHGRLAEIVCNYGAATPQTWINIANHILSPDLPFSLHQMLFYGCYKDFGPAPPAWIPDPEKVKSTNLGALLEKRGKEFLGVKYKDPISSFSHFQEFSVRNPEVYWRTVLMDEMKISFSKDPECILRRDDINNPGGSEWLPGGYLNSAKNCLNVNSNKKLNDTMIVWRDEGNDDLPLNKLTLDQLRKRVWLVGYALEEMGLEKGCAIAIDMPMHVDAVVIYLAIVLAGYVVVSIADSFSAPEISTRLRLSKAKAIFTQDHIIRGKKRIPLYSRVVEAKSPMAIVIPCSGSNIGAELRDGDISWDYFLERAKEFKNCEFTAREQPVDAYTNILFSSGTTGEPKAIPWTQATPLKAAADGWSHLDIRKGDVIVWPTNLGWMMGPWLVYASLLNGASIALYNGSPLVSGFAKFVQDAKVTMLGVVPSIVRSWKSTNCVSGYDWSTIRCFSSSGEASNVDEYLWLMGRANYKPVIEMCGGTEIGGAFSAGSFLQAQSLSSFSSQCMGCTLYILDKNGYPMPKNKPGIGELALGPVMFGASKTLLNGNHHDVYFKGMPTLNGEVLRRHGDIFELTSNGYYHAHGRADDTMNIGGIKISSIEIERVCNEVDDRVFETTAIGVPPLGGGPEQLVIFFVLKDSNDTTIDLNQLRLSFNLGLQKKLNPLFKVTRVVPLSSLPRTATNKIMRRVLRQQFSHFE.

A helical transmembrane segment spans residues 242–262 (VDAVVIYLAIVLAGYVVVSIA). 290–293 (RGKK) provides a ligand contact to CoA. ATP is bound by residues 477–479 (GEA), 499–504 (EMCGGT), glutamate 585, and arginine 607. Residue glycine 615 coordinates CoA. Residue lysine 618 coordinates ATP. A CoA-binding site is contributed by glutamine 681.

The protein belongs to the ATP-dependent AMP-binding enzyme family. Mg(2+) is required as a cofactor. In terms of tissue distribution, accumulates in glandular trichomes, especially in female flowers. Present at low levels in roots, stems and leaves.

The protein resides in the cytoplasm. It is found in the cytosol. The protein localises to the membrane. It catalyses the reaction hexanoate + ATP + CoA = hexanoyl-CoA + AMP + diphosphate. Its pathway is secondary metabolite biosynthesis; terpenoid biosynthesis. Inhibitied by high CoA concentrations. Its function is as follows. Involved in the biosynthesis of cannabinoids-related terpenophenolic natural products, which have pharmacological activity. Acyl-activating enzyme that catalyzes the conversion of hexanoic acid to hexanoyl-CoA, precursor of the cannabinoid pathway. Can also activate other fatty acids including heptanoate, octanoate and nonanoate. This Cannabis sativa (Hemp) protein is Hexanoyl-CoA synthase.